A 626-amino-acid polypeptide reads, in one-letter code: ATP-dependent zinc metalloprotease FtsH 3 (626 aa).

Residues 1-7 (MNKLFRS) are Cytoplasmic-facing. The helical transmembrane segment at 8 to 28 (LAFYMLILVISVAIAVQLGGT) threads the bilayer. Residues 29–103 (SQQTTQLVYS…LDFRQDNTSG (75 aa)) lie on the Extracellular side of the membrane. A helical transmembrane segment spans residues 104–124 (IWAMLLQTLVPVVLVLLAFFF). Residues 125 to 626 (IMQQTQGSGN…GGTSQVAPAF (502 aa)) lie on the Cytoplasmic side of the membrane. Residue 197-204 (GPPGTGKT) coordinates ATP. His420 lines the Zn(2+) pocket. Glu421 is an active-site residue. Residues His424 and Asp496 each coordinate Zn(2+). The segment at 602–626 (PPRPKPEPLKPRMVGGGTSQVAPAF) is disordered.

The protein in the central section; belongs to the AAA ATPase family. In the C-terminal section; belongs to the peptidase M41 family. Homohexamer. Requires Zn(2+) as cofactor.

Its subcellular location is the cell membrane. Acts as a processive, ATP-dependent zinc metallopeptidase for both cytoplasmic and membrane proteins. Plays a role in the quality control of integral membrane proteins. The protein is ATP-dependent zinc metalloprotease FtsH 3 of Symbiobacterium thermophilum (strain DSM 24528 / JCM 14929 / IAM 14863 / T).